Consider the following 411-residue polypeptide: Tetra-peptide repeat homeobox protein 1 (411 aa).

Positions S3–R24 form a DNA-binding region, homeobox. Disordered regions lie at residues L20–L63, I88–P246, P286–A340, and L363–L411. Over residues Q27–P55 the composition is skewed to low complexity. Composition is skewed to pro residues over residues G95 to I139 and F149 to P246. The span at S295 to G307 shows a compositional bias: low complexity. A compositionally biased stretch (pro residues) spans A319–P335. Composition is skewed to polar residues over residues S366 to Q376 and G388 to H402.

It belongs to the paired homeobox family.

The protein resides in the nucleus. Its function is as follows. Transcription factor expressed after fertilization required for zygotic genome activation (ZGA), a critical event in early embryonic development during which the developmental control passes from maternally provided mRNAs to the expression of the zygotic genome after fertilization. Binds and activates expression of key ZGA marker genes, such as NANOGNB, ZSCAN4, DUXB, KLF5 and DPPA3. Binds to regulatory DNA sequences containing a 5'-TAATCC-3' sequence motif. The polypeptide is Tetra-peptide repeat homeobox protein 1 (Homo sapiens (Human)).